The chain runs to 362 residues: MAKVYNFSAGPAVLPHQVLAEAQSELLDWHGSGMSVMEMSHRGKEFMEIIHDAEQDLRQLMGIPAGYKVLFLQGGASLQFAMAPLNLLGDKDSIDIVNTGHWSKLAIKEAKRYAKVNVVASSEDRNFCYVPEEAAWQRDPNAAYLHYTSNETIGGLQFPYIPAEQHGVPLVCDMSSDFLSREVDVSRFGMIYAGAQKNIGPSGLTVLLIREDLLGKARADIPTMLNYQVHADADSMYNTPGTYPIYIAGLVFKWLKEQGGVKGIATRNEEKAGLLYHVIDSSGGFYSTHIEQPFRSKMNVVFKLRDEALDEIFLLEARKNGLAQLKGHRAVGGMRASIYNAMPIEGVKSLVNFMQDFARQYG.

Residue R42 coordinates L-glutamate. Pyridoxal 5'-phosphate contacts are provided by residues 76–77 (AS), W102, T152, D173, and Q196. K197 is modified (N6-(pyridoxal phosphate)lysine). 238–239 (NT) contributes to the pyridoxal 5'-phosphate binding site.

The protein belongs to the class-V pyridoxal-phosphate-dependent aminotransferase family. SerC subfamily. As to quaternary structure, homodimer. Pyridoxal 5'-phosphate serves as cofactor.

The protein localises to the cytoplasm. The enzyme catalyses O-phospho-L-serine + 2-oxoglutarate = 3-phosphooxypyruvate + L-glutamate. The catalysed reaction is 4-(phosphooxy)-L-threonine + 2-oxoglutarate = (R)-3-hydroxy-2-oxo-4-phosphooxybutanoate + L-glutamate. The protein operates within amino-acid biosynthesis; L-serine biosynthesis; L-serine from 3-phospho-D-glycerate: step 2/3. It participates in cofactor biosynthesis; pyridoxine 5'-phosphate biosynthesis; pyridoxine 5'-phosphate from D-erythrose 4-phosphate: step 3/5. Catalyzes the reversible conversion of 3-phosphohydroxypyruvate to phosphoserine and of 3-hydroxy-2-oxo-4-phosphonooxybutanoate to phosphohydroxythreonine. In Chromobacterium violaceum (strain ATCC 12472 / DSM 30191 / JCM 1249 / CCUG 213 / NBRC 12614 / NCIMB 9131 / NCTC 9757 / MK), this protein is Phosphoserine aminotransferase.